Here is a 123-residue protein sequence, read N- to C-terminus: N(4)-acetylcytidine amidohydrolase (123 aa).

Positions I6 to S101 constitute an ASCH domain. The Proton acceptor role is filled by K21. Catalysis depends on S24, which acts as the Nucleophile. The active-site Proton donor is the E74.

Belongs to the N(4)-acetylcytidine amidohydrolase family.

It carries out the reaction N(4)-acetylcytidine + H2O = cytidine + acetate + H(+). It catalyses the reaction N(4)-acetyl-2'-deoxycytidine + H2O = 2'-deoxycytidine + acetate + H(+). The catalysed reaction is N(4)-acetylcytosine + H2O = cytosine + acetate + H(+). Catalyzes the hydrolysis of N(4)-acetylcytidine (ac4C). The protein is N(4)-acetylcytidine amidohydrolase of Haemophilus influenzae (strain ATCC 51907 / DSM 11121 / KW20 / Rd).